The chain runs to 389 residues: Succinate--CoA ligase [ADP-forming] subunit beta (389 aa).

The 236-residue stretch at 9 to 244 (KKLFADYGLP…LTQEDPREAE (236 aa)) folds into the ATP-grasp domain. ATP is bound by residues K46, 53 to 55 (GRG), E99, A102, and E107. Mg(2+) is bound by residues N199 and D213. Substrate is bound by residues N264 and 321–323 (GIV).

Belongs to the succinate/malate CoA ligase beta subunit family. As to quaternary structure, heterotetramer of two alpha and two beta subunits. It depends on Mg(2+) as a cofactor.

It catalyses the reaction succinate + ATP + CoA = succinyl-CoA + ADP + phosphate. The enzyme catalyses GTP + succinate + CoA = succinyl-CoA + GDP + phosphate. It functions in the pathway carbohydrate metabolism; tricarboxylic acid cycle; succinate from succinyl-CoA (ligase route): step 1/1. Succinyl-CoA synthetase functions in the citric acid cycle (TCA), coupling the hydrolysis of succinyl-CoA to the synthesis of either ATP or GTP and thus represents the only step of substrate-level phosphorylation in the TCA. The beta subunit provides nucleotide specificity of the enzyme and binds the substrate succinate, while the binding sites for coenzyme A and phosphate are found in the alpha subunit. This Histophilus somni (strain 2336) (Haemophilus somnus) protein is Succinate--CoA ligase [ADP-forming] subunit beta.